A 242-amino-acid polypeptide reads, in one-letter code: Terpene cyclase dpchB (242 aa).

A run of 7 helical transmembrane segments spans residues 16 to 36 (VVWIADTCKLIMGIGWTANYV), 51 to 71 (ALLPLCCNFAWELTYAIMYAF), 78 to 95 (YVHFSGLLLNCGVMYTAV), 114 to 134 (LIFVLAVAGFASAHVVLAKQV), 141 to 161 (AWSAYACQLLLSVGGLCQLLC), 169 to 189 (SYFLWFSRFFGSLVLVPQDII), and 207 to 227 (IWFVTIFLILDGSYGLCLWYV).

Belongs to the paxB family.

The protein resides in the membrane. Its pathway is secondary metabolite biosynthesis; terpenoid biosynthesis. In terms of biological role, terpene cyclase; part of the gene cluster that mediates the biosynthesis of the diterpenoid pyrones higginsianins A and B. The first step of the pathway is the synthesis of the alpha-pyrone moiety by the polyketide synthase dpchA via condensation of one acetyl-CoA starter unit with 3 malonyl-CoA units and 2 methylations. The alpha-pyrone is then combined with geranylgeranyl pyrophosphate (GGPP) formed by the GGPP synthase dpchD through the action of the prenyltransferase dpchC to yield a linear alpha-pyrone diterpenoid. Subsequent steps in the diterpenoid pyrone biosynthetic pathway involve the decalin core formation, which is initiated by the epoxidation of the C10-C11 olefin by the FAD-dependent oxidoreductase dpchE, and is followed by a cyclization cascade catalyzed by the terpene cyclase dpchB. The short chain dehydrogenase/reductase dpchG then oxidizes the 8S hydroxy group to a ketone and the short chain dehydrogenase/reductase dpchH reduces the ketone to the 8R hydroxy group to yield higginsianin B. Finally, the FAD-dependent oxidoreductase dpchF converts higginsianin B into higginsianin A. The sequence is that of Terpene cyclase dpchB from Colletotrichum higginsianum (strain IMI 349063) (Crucifer anthracnose fungus).